We begin with the raw amino-acid sequence, 92 residues long: Small ribosomal subunit protein uS19 (92 aa).

The protein belongs to the universal ribosomal protein uS19 family.

Protein S19 forms a complex with S13 that binds strongly to the 16S ribosomal RNA. The sequence is that of Small ribosomal subunit protein uS19 from Oceanobacillus iheyensis (strain DSM 14371 / CIP 107618 / JCM 11309 / KCTC 3954 / HTE831).